We begin with the raw amino-acid sequence, 76 residues long: MTDVETTYADFIASGRTGRRNAIHDILVSSASGNSNELALKLAGLDINKTEGEEDAQRSSTEQSGEAQGEAAKSES.

Residue threonine 2 is modified to N-acetylthreonine. Positions 49 to 76 (KTEGEEDAQRSSTEQSGEAQGEAAKSES) are disordered.

It belongs to the PKI family.

In terms of biological role, extremely potent competitive inhibitor of cAMP-dependent protein kinase activity, this protein interacts with the catalytic subunit of the enzyme after the cAMP-induced dissociation of its regulatory chains. This is cAMP-dependent protein kinase inhibitor alpha (PKIA) from Homo sapiens (Human).